A 130-amino-acid chain; its full sequence is Sulfurtransferase TusD (130 aa).

Cys78 functions as the Cysteine persulfide intermediate in the catalytic mechanism.

It belongs to the DsrE/TusD family. Heterohexamer, formed by a dimer of trimers. The hexameric TusBCD complex contains 2 copies each of TusB, TusC and TusD. The TusBCD complex interacts with TusE.

It is found in the cytoplasm. Its function is as follows. Part of a sulfur-relay system required for 2-thiolation of 5-methylaminomethyl-2-thiouridine (mnm(5)s(2)U) at tRNA wobble positions. Accepts sulfur from TusA and transfers it in turn to TusE. The chain is Sulfurtransferase TusD from Buchnera aphidicola subsp. Baizongia pistaciae (strain Bp).